The following is a 203-amino-acid chain: uncharacterized protein (203 aa).

The disordered stretch occupies residues S117–A138. Over residues Q124–A138 the composition is skewed to polar residues.

The protein localises to the cytoplasm. Its subcellular location is the nucleus. This is an uncharacterized protein from Schizosaccharomyces pombe (strain 972 / ATCC 24843) (Fission yeast).